A 415-amino-acid polypeptide reads, in one-letter code: MTSPALTAASVTPSRNTTSPDTTSHRPASVGVVSPVFLRFDEPLPLASGQSLNAYELAVETYGTLNAERSNAVLICHALNASHHVAGVAAGNPKDVGWWDNMVGPGKPVDTDVFFVIGINNLGSCFGSTGPASTNPETGLPWGAAFPVLTVEDWVRAQARVADHFGIQRFAAVMGGSLGGMQALSWAITLPERVAHCVVIASTPRLSAQNIGFNEVARRAIITDPGFHGGNYYAHDTVPHRGLAVARMIGHITYLSDDDMAEKFGRTQREPAENGAYRYGYDVEFEVESYLRYQGEKFSRYFDANTYLLITRALDYFDPARATGGDLARALSSAQADFLLVSFTTDWRFPPERSRDIVRALLKNGSPVTYAEIDAPHGHDAFLLEDARYHAVVSAYYERIARNLGLTRQAEESAA.

Positions M1–R26 are enriched in polar residues. Residues M1–P27 form a disordered region. The 316-residue stretch at N71–D386 folds into the AB hydrolase-1 domain. The active-site Nucleophile is S177. R247 is a binding site for substrate. Active-site residues include D346 and H379. Residue D380 coordinates substrate.

This sequence belongs to the AB hydrolase superfamily. MetX family. In terms of assembly, homodimer.

The protein resides in the cytoplasm. The enzyme catalyses L-homoserine + succinyl-CoA = O-succinyl-L-homoserine + CoA. The protein operates within amino-acid biosynthesis; L-methionine biosynthesis via de novo pathway; O-succinyl-L-homoserine from L-homoserine: step 1/1. In terms of biological role, transfers a succinyl group from succinyl-CoA to L-homoserine, forming succinyl-L-homoserine. The sequence is that of Homoserine O-succinyltransferase from Bordetella avium (strain 197N).